The chain runs to 307 residues: Adenosylcobinamide-GDP ribazoletransferase (307 aa).

8 helical membrane-spanning segments follow: residues 22–42 (PLFEGIFTALNWMTVLPVPGA), 58–78 (PFVGFVFGMFTAIIMWAIGPI), 80–100 (GVIHVDGLLVAVLIVAFWELL), 137–157 (FGLATAMLSVLLQVAAVASLV), 161–181 (VWWMICFIPVLGRIAGQVTAL), 212–232 (TAALAFWCAELISPLSPLTSV), 248–268 (AWLGGWVAITAVVACVFAALF), and 283–303 (CIGACIHLGASISAVMFAVVA).

It belongs to the CobS family. The cofactor is Mg(2+).

The protein localises to the cell membrane. The catalysed reaction is alpha-ribazole + adenosylcob(III)inamide-GDP = adenosylcob(III)alamin + GMP + H(+). The enzyme catalyses alpha-ribazole 5'-phosphate + adenosylcob(III)inamide-GDP = adenosylcob(III)alamin 5'-phosphate + GMP + H(+). It participates in cofactor biosynthesis; adenosylcobalamin biosynthesis; adenosylcobalamin from cob(II)yrinate a,c-diamide: step 7/7. Joins adenosylcobinamide-GDP and alpha-ribazole to generate adenosylcobalamin (Ado-cobalamin). Also synthesizes adenosylcobalamin 5'-phosphate from adenosylcobinamide-GDP and alpha-ribazole 5'-phosphate. This Corynebacterium glutamicum (strain ATCC 13032 / DSM 20300 / JCM 1318 / BCRC 11384 / CCUG 27702 / LMG 3730 / NBRC 12168 / NCIMB 10025 / NRRL B-2784 / 534) protein is Adenosylcobinamide-GDP ribazoletransferase.